The following is a 185-amino-acid chain: dCTP deaminase (185 aa).

Residues 107–112 (KSTYAR), 131–133 (TLE), glutamine 152, tyrosine 166, and glutamine 176 each bind dCTP. Glutamate 133 functions as the Proton donor/acceptor in the catalytic mechanism.

Belongs to the dCTP deaminase family. Homotrimer.

The enzyme catalyses dCTP + H2O + H(+) = dUTP + NH4(+). It functions in the pathway pyrimidine metabolism; dUMP biosynthesis; dUMP from dCTP (dUTP route): step 1/2. Functionally, catalyzes the deamination of dCTP to dUTP. This chain is dCTP deaminase, found in Wolbachia sp. subsp. Brugia malayi (strain TRS).